We begin with the raw amino-acid sequence, 311 residues long: Glutaminase (311 aa).

Positions 66, 116, 162, 169, 193, 245, and 263 each coordinate substrate.

Belongs to the glutaminase family. As to quaternary structure, homotetramer.

The catalysed reaction is L-glutamine + H2O = L-glutamate + NH4(+). The chain is Glutaminase from Rhodopseudomonas palustris (strain HaA2).